Here is a 473-residue protein sequence, read N- to C-terminus: Catalase easC (473 aa).

Residues 1 to 15 (MASEVSVASSGSEHS) show a composition bias toward low complexity. The segment at 1 to 31 (MASEVSVASSGSEHSGAQKCPFQDPGLSSMD) is disordered. Residue His54 is part of the active site. Heme is bound at residue Tyr344. Residues 352 to 389 (LGPNNLDLPANRTKKLADGSRPEKAEMAPQKVPSQEHA) are disordered. Residues 366-377 (KLADGSRPEKAE) are compositionally biased toward basic and acidic residues.

Belongs to the catalase family. It depends on heme as a cofactor.

Its pathway is alkaloid biosynthesis; ergot alkaloid biosynthesis. Functionally, catalase; part of the gene cluster that mediates the biosynthesis of fungal ergot alkaloid. DmaW catalyzes the first step of ergot alkaloid biosynthesis by condensing dimethylallyl diphosphate (DMAP) and tryptophan to form 4-dimethylallyl-L-tryptophan. The second step is catalyzed by the methyltransferase easF that methylates 4-dimethylallyl-L-tryptophan in the presence of S-adenosyl-L-methionine, resulting in the formation of 4-dimethylallyl-L-abrine. The catalase easC and the FAD-dependent oxidoreductase easE then transform 4-dimethylallyl-L-abrine to chanoclavine-I which is further oxidized by easD in the presence of NAD(+), resulting in the formation of chanoclavine-I aldehyde. Agroclavine dehydrogenase easG then mediates the conversion of chanoclavine-I aldehyde to agroclavine via a non-enzymatic adduct reaction: the substrate is an iminium intermediate that is formed spontaneously from chanoclavine-I aldehyde in the presence of glutathione. The presence of easA is not required to complete this reaction. Further conversion of agroclavine to paspalic acid is a two-step process involving oxidation of agroclavine to elymoclavine and of elymoclavine to paspalic acid, the second step being performed by the elymoclavine oxidase cloA. Paspalic acid is then further converted to D-lysergic acid. Ergopeptines are assembled from D-lysergic acid and three different amino acids by the D-lysergyl-peptide-synthetases composed each of a monomudular and a trimodular nonribosomal peptide synthetase subunit. LpsB and lpsC encode the monomodular subunits responsible for D-lysergic acid activation and incorporation into the ergopeptine backbone. LpsA1 and A2 subunits encode the trimodular nonribosomal peptide synthetase assembling the tripeptide portion of ergopeptines. LpsA1 is responsible for formation of the major ergopeptine, ergotamine, and lpsA2 for alpha-ergocryptine, the minor ergopeptine of the total alkaloid mixture elaborated by C.purpurea. D-lysergyl-tripeptides are assembled by the nonribosomal peptide synthetases and released as N-(D-lysergyl-aminoacyl)-lactams. Cyclolization of the D-lysergyl-tripeptides is performed by the Fe(2+)/2-ketoglutarate-dependent dioxygenase easH which introduces a hydroxyl group into N-(D-lysergyl-aminoacyl)-lactam at alpha-C of the aminoacyl residue followed by spontaneous condensation with the terminal lactam carbonyl group. The chain is Catalase easC from Claviceps purpurea (strain 20.1) (Ergot fungus).